A 324-amino-acid polypeptide reads, in one-letter code: NADH-quinone oxidoreductase subunit H 2 (324 aa).

A run of 9 helical transmembrane segments spans residues 1 to 21 (MIGMALTAIISTMLIMVLLVV), 77 to 97 (ILAPMVAATPVLAGFGVVAFG), 109 to 129 (VMFLLGMMGLTVYGVVLGALA), 147 to 167 (LGYEAFLGLSLLGVVMIAGSL), 179 to 199 (VWFVLLQPFGAALFCIAGVAA), 214 to 234 (LVAGYLTEYTGMSFGLFFLGE), 238 to 258 (VLLVASLAVTLFFGGWLGPVW), 263 to 283 (LPGPIWFGLKVGVIALIFIWI), and 298 to 318 (FAWKIALPLALANLLLTGLIV).

The protein belongs to the complex I subunit 1 family. In terms of assembly, NDH-1 is composed of 14 different subunits. Subunits NuoA, H, J, K, L, M, N constitute the membrane sector of the complex.

It is found in the cell inner membrane. It catalyses the reaction a quinone + NADH + 5 H(+)(in) = a quinol + NAD(+) + 4 H(+)(out). Its function is as follows. NDH-1 shuttles electrons from NADH, via FMN and iron-sulfur (Fe-S) centers, to quinones in the respiratory chain. The immediate electron acceptor for the enzyme in this species is believed to be ubiquinone. Couples the redox reaction to proton translocation (for every two electrons transferred, four hydrogen ions are translocated across the cytoplasmic membrane), and thus conserves the redox energy in a proton gradient. This subunit may bind ubiquinone. The protein is NADH-quinone oxidoreductase subunit H 2 of Rhodopseudomonas palustris (strain BisB18).